The following is an 852-amino-acid chain: DNA mismatch repair protein MutS (852 aa).

602–609 (GPNMSGKS) contacts ATP.

The protein belongs to the DNA mismatch repair MutS family.

In terms of biological role, this protein is involved in the repair of mismatches in DNA. It is possible that it carries out the mismatch recognition step. This protein has a weak ATPase activity. The chain is DNA mismatch repair protein MutS from Streptococcus thermophilus (strain CNRZ 1066).